The following is a 199-amino-acid chain: Chaperone protein TorD (199 aa).

It belongs to the TorD/DmsD family. TorD subfamily.

It is found in the cytoplasm. Functionally, involved in the biogenesis of TorA. Acts on TorA before the insertion of the molybdenum cofactor and, as a result, probably favors a conformation of the apoenzyme that is competent for acquiring the cofactor. This Escherichia coli O81 (strain ED1a) protein is Chaperone protein TorD.